The chain runs to 59 residues: Large ribosomal subunit protein bL32 (59 aa).

The interval 1 to 59 (MAVQQNKKSPSKRGMHRAHDFLTAPVIAIEPSTGEAHRRHHISPNGFYRGRKVVKGKDE) is disordered. Positions 49–59 (RGRKVVKGKDE) are enriched in basic residues.

Belongs to the bacterial ribosomal protein bL32 family.

This chain is Large ribosomal subunit protein bL32, found in Laribacter hongkongensis (strain HLHK9).